Here is a 142-residue protein sequence, read N- to C-terminus: Small ribosomal subunit protein uS12 (142 aa).

Positions methionine 1–serine 30 are disordered. Basic residues predominate over residues arginine 11–glutamine 20. Basic and acidic residues predominate over residues arginine 21–serine 30. Proline 61 is modified (hydroxyproline).

This sequence belongs to the universal ribosomal protein uS12 family.

This is Small ribosomal subunit protein uS12 (RPS23) from Fragaria ananassa (Strawberry).